Reading from the N-terminus, the 396-residue chain is Elongation factor Tu (396 aa).

Residues 10–206 (KPHVNVGTIG…ALDTYIPTPE (197 aa)) enclose the tr-type G domain. The G1 stretch occupies residues 19 to 26 (GHVDHGKT). Position 19–26 (19–26 (GHVDHGKT)) interacts with GTP. Thr-26 provides a ligand contact to Mg(2+). The G2 stretch occupies residues 60–64 (GITIN). A G3 region spans residues 81–84 (DCPG). Residues 81–85 (DCPGH) and 136–139 (NKCD) contribute to the GTP site. The interval 136 to 139 (NKCD) is G4. The interval 174–176 (SAK) is G5.

It belongs to the TRAFAC class translation factor GTPase superfamily. Classic translation factor GTPase family. EF-Tu/EF-1A subfamily. Monomer.

It localises to the cytoplasm. It catalyses the reaction GTP + H2O = GDP + phosphate + H(+). Functionally, GTP hydrolase that promotes the GTP-dependent binding of aminoacyl-tRNA to the A-site of ribosomes during protein biosynthesis. This chain is Elongation factor Tu, found in Cupriavidus necator (strain ATCC 17699 / DSM 428 / KCTC 22496 / NCIMB 10442 / H16 / Stanier 337) (Ralstonia eutropha).